A 261-amino-acid polypeptide reads, in one-letter code: Glucose 1-dehydrogenase (261 aa).

11 to 35 (AITGAASGLGKAMAIRFGKEQAKVV) lines the NADP(+) pocket. Substrate is bound at residue serine 145. Tyrosine 158 functions as the Proton acceptor in the catalytic mechanism.

This sequence belongs to the short-chain dehydrogenases/reductases (SDR) family. Homotetramer.

It catalyses the reaction D-glucose + NAD(+) = D-glucono-1,5-lactone + NADH + H(+). It carries out the reaction D-glucose + NADP(+) = D-glucono-1,5-lactone + NADPH + H(+). This chain is Glucose 1-dehydrogenase (gdh), found in Bacillus subtilis (strain 168).